The following is a 416-amino-acid chain: Floricaula/leafy homolog 2 (416 aa).

The segment at 154 to 237 (EGLSEEPVQQ…DASGGISERQ (84 aa)) is disordered. Over residues 210–225 (AEEDEETEEGQEDDWN) the composition is skewed to acidic residues. DNA-binding regions lie at residues 238–242 (REHPF), 307–314 (NKPKMRHY), and 378–381 (YVPT).

This sequence belongs to the FLO/LFY family. Expressed in floral meristems and in indeterminate vegetative meristems.

It is found in the nucleus. Functionally, probable transcription factor that act to specify determinacy in the progenitor cells for both flowers and leaves. This Nicotiana tabacum (Common tobacco) protein is Floricaula/leafy homolog 2 (FL2).